Here is a 238-residue protein sequence, read N- to C-terminus: Pyridoxine 5'-phosphate synthase (238 aa).

Residue Asn-7 participates in 3-amino-2-oxopropyl phosphate binding. 9 to 10 is a 1-deoxy-D-xylulose 5-phosphate binding site; sequence DH. Arg-18 is a 3-amino-2-oxopropyl phosphate binding site. His-43 (proton acceptor) is an active-site residue. The 1-deoxy-D-xylulose 5-phosphate site is built by Arg-45 and His-50. Glu-70 acts as the Proton acceptor in catalysis. Residue Thr-100 participates in 1-deoxy-D-xylulose 5-phosphate binding. The active-site Proton donor is the His-190. Residues Gly-191 and 212–213 contribute to the 3-amino-2-oxopropyl phosphate site; that span reads GH.

The protein belongs to the PNP synthase family. In terms of assembly, homooctamer; tetramer of dimers.

Its subcellular location is the cytoplasm. The enzyme catalyses 3-amino-2-oxopropyl phosphate + 1-deoxy-D-xylulose 5-phosphate = pyridoxine 5'-phosphate + phosphate + 2 H2O + H(+). Its pathway is cofactor biosynthesis; pyridoxine 5'-phosphate biosynthesis; pyridoxine 5'-phosphate from D-erythrose 4-phosphate: step 5/5. Catalyzes the complicated ring closure reaction between the two acyclic compounds 1-deoxy-D-xylulose-5-phosphate (DXP) and 3-amino-2-oxopropyl phosphate (1-amino-acetone-3-phosphate or AAP) to form pyridoxine 5'-phosphate (PNP) and inorganic phosphate. The chain is Pyridoxine 5'-phosphate synthase from Prochlorococcus marinus (strain AS9601).